Consider the following 488-residue polypeptide: H2.0-like homeobox protein (488 aa).

Disordered regions lie at residues 118 to 173 (AYHH…SSKD) and 331 to 488 (WRHS…LGCL). Composition is skewed to low complexity over residues 125–135 (QQQQQQQQPQQ) and 158–171 (PNPH…APSS). Residues 276–335 (RSWSRAVFSNLQRKGLEKRFEIQKYVTKPDRKQLAAMLGLTDAQVKVWFQNRRMKWRHSK) constitute a DNA-binding region (homeobox). Basic and acidic residues-rich tracts occupy residues 334 to 349 (SKEA…EAGE) and 363 to 372 (DERSPSRSEG). Positions 373–383 (EAESESSDSES) are enriched in acidic residues. Basic and acidic residues predominate over residues 390–401 (DTERTEGSERSL). The segment covering 422 to 432 (GSGGSSGGGGN) has biased composition (gly residues). Over residues 433–454 (SFSFSSASSLSSSSTSAGCASS) the composition is skewed to low complexity.

The protein belongs to the H2.0 homeobox family. As to expression, low level in normal B and T-cells, high level in activated lymphocytes and monocytes. Also found in thymus, tonsil, bone marrow, developing vessels, and fetal brain.

It is found in the nucleus. In terms of biological role, transcription factor required for TBX21/T-bet-dependent maturation of Th1 cells as well as maintenance of Th1-specific gene expression. Involved in embryogenesis and hematopoiesis. This Homo sapiens (Human) protein is H2.0-like homeobox protein (HLX).